The sequence spans 363 residues: 43 kDa protein (363 aa).

The protein is 43 kDa protein (P43) of Lepidoptera (butterflies and moths).